A 572-amino-acid chain; its full sequence is RNA polymerase sigma factor sigB (572 aa).

The transit peptide at 1 to 39 directs the protein to the chloroplast; the sequence is MSSCLLPQFKCPPDSFSIHFRTSFCAPKHNKGSVFFQPQ. Residues 215-249 form a disordered region; the sequence is TRQTERKARRAKGLEKTASGIPSVKTGSSPKKKRL. Positions 360 to 373 match the Polymerase core binding motif; that stretch reads DLVQEGCRGLVRGA. Residues 530–549 constitute a DNA-binding region (H-T-H motif); it reads LQEIGEMMGVSRERVRQIES.

Belongs to the sigma-70 factor family. In terms of tissue distribution, highly expressed in cotyledons, to a lesser extent in leaves, sepals and siliques, and barely expressed in roots. Present in seedlings.

It localises to the plastid. The protein resides in the chloroplast. Functionally, required for the transition of plastids into chloroplasts by coordinating nuclear and chloroplastic genomes under light conditions. Sigma factors are initiation factors that promote the attachment of plastid-encoded RNA polymerase (PEP) to specific initiation sites and are then released. Promotes the biosynthesis of plastid-encoded tRNAs (e.g. trnE-UUC and trnV-UAC). This chain is RNA polymerase sigma factor sigB (SIGB), found in Arabidopsis thaliana (Mouse-ear cress).